A 79-amino-acid chain; its full sequence is Sulfur carrier protein TusA (79 aa).

Cys-17 functions as the Cysteine persulfide intermediate in the catalytic mechanism.

This sequence belongs to the sulfur carrier protein TusA family.

The protein localises to the cytoplasm. In terms of biological role, sulfur carrier protein which probably makes part of a sulfur-relay system. This is Sulfur carrier protein TusA from Haemophilus influenzae (strain 86-028NP).